We begin with the raw amino-acid sequence, 119 residues long: Large ribosomal subunit protein bL20 (119 aa).

It belongs to the bacterial ribosomal protein bL20 family.

Binds directly to 23S ribosomal RNA and is necessary for the in vitro assembly process of the 50S ribosomal subunit. It is not involved in the protein synthesizing functions of that subunit. This Streptococcus thermophilus (strain ATCC BAA-491 / LMD-9) protein is Large ribosomal subunit protein bL20.